The chain runs to 321 residues: GDP-L-fucose synthase (321 aa).

NADP(+) is bound at residue 14-20 (GGSGLVG). Residue Y143 is the Proton donor/acceptor of the active site. NADP(+)-binding positions include K147, 170–173 (PTNV), and H186. The substrate site is built by K194, W208, R215, and D277.

Belongs to the NAD(P)-dependent epimerase/dehydratase family. Fucose synthase subfamily. As to quaternary structure, homodimer.

The catalysed reaction is GDP-beta-L-fucose + NADP(+) = GDP-4-dehydro-alpha-D-rhamnose + NADPH + H(+). It functions in the pathway nucleotide-sugar biosynthesis; GDP-L-fucose biosynthesis via de novo pathway; GDP-L-fucose from GDP-alpha-D-mannose: step 2/2. Functionally, catalyzes the two-step NADP-dependent conversion of GDP-4-dehydro-6-deoxy-D-mannose to GDP-fucose, involving an epimerase and a reductase reaction. The sequence is that of GDP-L-fucose synthase from Homo sapiens (Human).